The primary structure comprises 205 residues: Ribonuclease HII (205 aa).

The RNase H type-2 domain occupies 14 to 201 (EIIAGVDEAG…KGNINHSAIL (188 aa)). A divalent metal cation contacts are provided by D20, E21, and D111.

Belongs to the RNase HII family. Mn(2+) is required as a cofactor. Mg(2+) serves as cofactor.

It localises to the cytoplasm. It carries out the reaction Endonucleolytic cleavage to 5'-phosphomonoester.. In terms of biological role, endonuclease that specifically degrades the RNA of RNA-DNA hybrids. The sequence is that of Ribonuclease HII from Orientia tsutsugamushi (strain Ikeda) (Rickettsia tsutsugamushi).